We begin with the raw amino-acid sequence, 216 residues long: Ribosomal RNA small subunit methyltransferase G (216 aa).

Residues glycine 86, leucine 91, valine 137 to glutamate 138, and arginine 155 each bind S-adenosyl-L-methionine.

Belongs to the methyltransferase superfamily. RNA methyltransferase RsmG family.

It localises to the cytoplasm. The enzyme catalyses guanosine(527) in 16S rRNA + S-adenosyl-L-methionine = N(7)-methylguanosine(527) in 16S rRNA + S-adenosyl-L-homocysteine. Functionally, specifically methylates the N7 position of guanine in position 527 of 16S rRNA. The polypeptide is Ribosomal RNA small subunit methyltransferase G (Lawsonia intracellularis (strain PHE/MN1-00)).